Here is a 345-residue protein sequence, read N- to C-terminus: WD40 repeat protein poxJ (345 aa).

WD repeat units follow at residues alanine 15–serine 49, leucine 59–glutamine 100, valine 101–threonine 146, and valine 250–serine 284.

The protein belongs to the WD repeat rae1 family.

Its pathway is secondary metabolite biosynthesis. Its function is as follows. WD40 repeat protein; part of the gene cluster that mediates the biosynthesis of oxaleimides, cytotoxic compounds containing an unusual disubstituted succinimide moiety. The first step of the pathway is provided by the HR-PKS poxF that serves in a new mode of collaborative biosynthesis with the PKS-NRPS poxE, by providing the olefin containing amino acid substrate via the synthesis of an ACP-bound dec-4-enoate. The cytochrome P450 monooxygenase poxM-catalyzed oxidation at the alpha-position creates the enzyme-bound 2-hydroxydec-4-enoyl-ACP thioester, which may be prone to spontaneous hydrolysis to yield 2-hydroxydec-4-enoic acid due to increased electrophilicity of the carbonyl. 2-hydroxydec-4-enoic acid can then be further oxidized by poxM to yield the alpha-ketoacid 2-oxodec-4-enoicacid, which is reductively aminated by the aminotransferase poxL to yield (S,E)-2-aminodec-4-enoic acid. The Hybrid PKS-NRPS synthetase poxE then performs condensation between the octaketide product of its PKS modules and the amino group of (S,E)-2-aminodec-4-enoic acid which is activated and incorporated by the adenylation domain. The resulting aminoacyl product can be cyclized by the Diels-Alderase PoxQ and reductively released by the reductive (R) domain of poxE to yield an aldehyde intermediate. The released aldehyde is then substrate for a Knoevenagel condensation by the hydrolyase poxO followed by an oxidation at the 5-position of the pyrrolidone ring. The presence of the olefin from the amino acid building block allows for migration of the substituted allyl group to occur. This allylic transposition reaction takes place in a conjugate addition, semipinacol-like fashion to yield a succinimide intermediate. Iterative two-electron oxidations of the C7 methyl of the succinimide intermediate to the carboxylic acid can be catalyzed by one of two remaining cytochrome P450 monooxygenasess poxC or poxD to yield oxaleimide A. Subsequent oxidation yields the maleimide scaffold oxaleimide I. Both oxaleimide A and oxaleimide I can undergo oxidative modifications in the decalin ring to yield the series of products oxaleimides B to H. This chain is WD40 repeat protein poxJ, found in Penicillium oxalicum (strain 114-2 / CGMCC 5302) (Penicillium decumbens).